A 215-amino-acid polypeptide reads, in one-letter code: Probable transaldolase (215 aa).

Lys83 (schiff-base intermediate with substrate) is an active-site residue.

The protein belongs to the transaldolase family. Type 3B subfamily.

The protein resides in the cytoplasm. The enzyme catalyses D-sedoheptulose 7-phosphate + D-glyceraldehyde 3-phosphate = D-erythrose 4-phosphate + beta-D-fructose 6-phosphate. The protein operates within carbohydrate degradation; pentose phosphate pathway; D-glyceraldehyde 3-phosphate and beta-D-fructose 6-phosphate from D-ribose 5-phosphate and D-xylulose 5-phosphate (non-oxidative stage): step 2/3. Its function is as follows. Transaldolase is important for the balance of metabolites in the pentose-phosphate pathway. The chain is Probable transaldolase from Anaeromyxobacter sp. (strain Fw109-5).